The chain runs to 286 residues: Penicillin-insensitive murein endopeptidase (286 aa).

A signal peptide spans 1–22 (MNKILLKTTIIFTALFSLNVVA). Residues H117, H120, D127, D152, and H218 each contribute to the Zn(2+) site.

The protein belongs to the peptidase M74 family. The cofactor is Zn(2+).

Its subcellular location is the periplasm. Its function is as follows. Murein endopeptidase that cleaves the D-alanyl-meso-2,6-diamino-pimelyl amide bond that connects peptidoglycan strands. Likely plays a role in the removal of murein from the sacculus. The protein is Penicillin-insensitive murein endopeptidase (mepA) of Haemophilus influenzae (strain ATCC 51907 / DSM 11121 / KW20 / Rd).